Reading from the N-terminus, the 567-residue chain is Urease subunit alpha (567 aa).

Residues histidine 134, histidine 136, and lysine 217 each coordinate Ni(2+). The residue at position 217 (lysine 217) is an N6-carboxylysine. Residue histidine 219 participates in substrate binding. The Ni(2+) site is built by histidine 246 and histidine 272. Residue histidine 320 is the Proton donor of the active site. Ni(2+) is bound at residue aspartate 360.

It belongs to the metallo-dependent hydrolases superfamily. Urease alpha subunit family. As to quaternary structure, heterotrimer of UreA (gamma), UreB (beta) and UreC (alpha) subunits. Three heterotrimers associate to form the active enzyme. Requires Ni cation as cofactor. Carboxylation allows a single lysine to coordinate two nickel ions.

Its subcellular location is the cytoplasm. It carries out the reaction urea + 2 H2O + H(+) = hydrogencarbonate + 2 NH4(+). It functions in the pathway nitrogen metabolism; urea degradation; CO(2) and NH(3) from urea (urease route): step 1/1. This chain is Urease subunit alpha, found in Pseudomonas putida (strain GB-1).